A 243-amino-acid polypeptide reads, in one-letter code: MGRKFEVRKVAMAKTAGAKTKVYSKYGKEIYMVAKNGGTDPQANLSLRRLIDKAKKDQVPSHVIDKAIDKAAGGAGEDFTPARYEGFGPGGCMVIVDCLTDNNNRTITDVRNCFTKTNSKIGVTGTVSHMFDHQAVFSFPGDDEDAVLEVLMEADVDVTEVECEEGVITVFAPHTEYFKTRTALTDNNPELEFDADEITFVPQTETVVTGEDVATFDKFMDMLEDCDDVQDVYHNAVVEREGE.

The protein belongs to the TACO1 family.

The protein localises to the cytoplasm. The protein is Probable transcriptional regulatory protein Patl_0550 of Pseudoalteromonas atlantica (strain T6c / ATCC BAA-1087).